Reading from the N-terminus, the 390-residue chain is tRNA (guanine(9)-N1)-methyltransferase (390 aa).

Residues 1–72 (MDIDEESYLN…RTAQLAEGYA (72 aa)) are disordered. A compositionally biased stretch (basic and acidic residues) spans 43–59 (ARLEEIKPLKRAAERER). The 249-residue stretch at 92–340 (KERKEAQRRI…AVIPIRKYAP (249 aa)) folds into the SAM-dependent MTase TRM10-type domain. S-adenosyl-L-methionine-binding positions include 246–247 (LS), glycine 266, 270–274 (DRNRH), cysteine 278, leucine 292, and 305–307 (KVL). The Proton acceptor role is filled by aspartate 270. The interval 343 to 390 (KTKRAKTETKRNEKEEEEVECTSAEGEEDIGVIEESAEVDPEDVFSNQ) is disordered. The span at 347 to 356 (AKTETKRNEK) shows a compositional bias: basic and acidic residues. Residues 357-390 (EEEEVECTSAEGEEDIGVIEESAEVDPEDVFSNQ) are compositionally biased toward acidic residues.

Belongs to the class IV-like SAM-binding methyltransferase superfamily. TRM10 family. As to quaternary structure, monomer.

It is found in the cytoplasm. The protein resides in the nucleus. It catalyses the reaction guanosine(9) in tRNA + S-adenosyl-L-methionine = N(1)-methylguanosine(9) in tRNA + S-adenosyl-L-homocysteine + H(+). Functionally, S-adenosyl-L-methionine-dependent guanine N(1)-methyltransferase that catalyzes the formation of N(1)-methylguanine at position 9 (m1G9) in cytoplasmic tRNA. In Cryptococcus neoformans var. neoformans serotype D (strain JEC21 / ATCC MYA-565) (Filobasidiella neoformans), this protein is tRNA (guanine(9)-N1)-methyltransferase.